Reading from the N-terminus, the 111-residue chain is Inner membrane protein YdgC (111 aa).

At methionine 1–tyrosine 26 the chain is on the cytoplasmic side. Residues tyrosine 27 to alanine 47 traverse the membrane as a helical segment. Residues serine 48–threonine 58 are Periplasmic-facing. The chain crosses the membrane as a helical span at residues isoleucine 59 to phenylalanine 79. Residues threonine 80–alanine 87 are Cytoplasmic-facing. The helical transmembrane segment at alanine 88 to isoleucine 108 threads the bilayer. Over lysine 109–histidine 111 the chain is Periplasmic.

To P.aeruginosa GlpM.

It is found in the cell inner membrane. The sequence is that of Inner membrane protein YdgC (ydgC) from Escherichia coli O157:H7.